The following is a 184-amino-acid chain: MDLLSMVLIGVGLAMDAFSISVSRGLALHESETNYALISALSFGTFQAAMPVLGWVSGLEIQRLVSALAPWAAFILLLIIGLKMIYESLIMEEEEFIFSYRELLVLSIATSIDAFAVGVSFALLDISIWLPVIVIGLITFILSLAGSYIGERVGHIFENRLEALGGLILILIGLKILLENVSFT.

Transmembrane regions (helical) follow at residues 3–23, 36–56, 65–85, 103–123, 126–146, and 163–183; these read LLSM…ISVS, ALIS…LGWV, VSAL…LKMI, LLVL…SFAL, ISIW…SLAG, and ALGG…NVSF.

It belongs to the MntP (TC 9.B.29) family.

The protein localises to the cell membrane. Functionally, probably functions as a manganese efflux pump. This chain is Putative manganese efflux pump MntP, found in Methanothermobacter thermautotrophicus (strain ATCC 29096 / DSM 1053 / JCM 10044 / NBRC 100330 / Delta H) (Methanobacterium thermoautotrophicum).